A 185-amino-acid chain; its full sequence is MINEIKKETEDKMKKTVEALRKEYQHIRAGRANPALLEKVTVEYYGAPTPVNQLANISAPEARLLVIQPWDKSVLPALEKAILKSDLGLTPTSDGAVIRLVIPQLTQERRSELVKTVKKRAEEHRVILRNLRRDANEDVKDLQKEHIISEDEGKRAQEEIQKLTDKYIREVDQVAERKEAEIMEV.

It belongs to the RRF family.

Its subcellular location is the cytoplasm. Functionally, responsible for the release of ribosomes from messenger RNA at the termination of protein biosynthesis. May increase the efficiency of translation by recycling ribosomes from one round of translation to another. The polypeptide is Ribosome-recycling factor (Heliobacterium modesticaldum (strain ATCC 51547 / Ice1)).